Here is a 1161-residue protein sequence, read N- to C-terminus: Cell wall protein DAN4 (1161 aa).

The first 19 residues, 1–19 (MVNISIVAGIVALATSAAA), serve as a signal peptide directing secretion. Disordered regions lie at residues 123 to 309 (TSTS…SASS), 326 to 345 (TPAT…STTN), 354 to 547 (TTTS…SSFG), and 691 to 713 (STDS…SSTA). The segment at 134 to 286 (TSTTPTTTIT…TTSTTSTTST (153 aa)) is 46 X 3 AA tandem repeats of T-[SP]-T. The span at 354-372 (TTTSDTYISSSSPSQVTSS) shows a compositional bias: low complexity. Tandem repeats lie at residues 373–384 (AEPTTVSEVTSS), 385–396 (VEPTRSSQVTSS), 397–408 (AEPTTVSEFTSS), 409–420 (VEPTRSSQVTSS), 421–432 (AEPTTVSEFTSS), 433–444 (VEPTRSSQVTSS), 445–456 (AEPTTVSEFTSS), 457–468 (VEPTRSSQVTSS), 469–480 (AEPTTVSEFTSS), 481–492 (VEPTRSSQVTSS), 493–504 (AEPTTVSEFTSS), 505–516 (VEPIRSSQVTSS), 517–528 (AEPTTVSEVTSS), and 529–540 (VEPIRSSQVTTT). Residues 373-540 (AEPTTVSEVT…PIRSSQVTTT (168 aa)) form a 14 X 12 AA approximate tandem repeats region. Polar residues predominate over residues 373 to 547 (AEPTTVSEVT…TTTEPVSSFG (175 aa)). A run of 2 repeats spans residues 826-913 (EDSV…EDNE) and 914-1001 (EDIT…EDNE). The tract at residues 826-1040 (EDSVLTKTQV…SPVSSFNSKA (215 aa)) is 2.5 X 88 AA approximate tandem repeats. Residues 1002–1040 (EDVASTKTELLTMETTITSCSGGICTTLMSPVSSFNSKA) form a 2-3; truncated repeat. Asn-1137 carries GPI-anchor amidated asparagine lipidation. Residues 1138–1161 (GAYNFDKDNIFGTAIVAVVALLLL) constitute a propeptide, removed in mature form.

The protein belongs to the SRP1/TIP1 family. Extensively O-glycosylated. Post-translationally, the GPI-anchor is attached to the protein in the endoplasmic reticulum and serves to target the protein to the cell surface. There, the glucosamine-inositol phospholipid moiety is cleaved off and the GPI-modified mannoprotein is covalently attached via its lipidless GPI glycan remnant to the 1,6-beta-glucan of the outer cell wall layer.

It localises to the secreted. The protein resides in the cell wall. It is found in the cell membrane. Functionally, component of the cell wall. The sequence is that of Cell wall protein DAN4 from Saccharomyces cerevisiae (strain ATCC 204508 / S288c) (Baker's yeast).